The sequence spans 735 residues: Polycomb protein sop-2 (735 aa).

Over residues 1–15 (MSSNLTSNEMSSTSA) the composition is skewed to polar residues. Disordered stretches follow at residues 1-59 (MSSN…SSSS), 223-288 (AARS…APAA), and 300-534 (PQES…PVLQ). Residues 224-503 (ARSSRMAARR…APATPATPAS (280 aa)) form an RNA-binding region. Residues 239–288 (YRGAFRGAARGAPSRRPAPAAEVAPETPVAAPMAPAAPAAPATPEAAPAA) show a composition bias toward low complexity. Composition is skewed to basic and acidic residues over residues 317-355 (DTSKEGEASRPTSEKKKKIRTTEMDRLMSMDLGPKDGGR) and 389-398 (RAAEKKKPED). Over residues 399-413 (SDAAEEQEVEMEVDN) the composition is skewed to acidic residues. The segment covering 450 to 470 (VEPKKEPVDEPAEKIPKRSEA) has biased composition (basic and acidic residues). The span at 471–504 (APEVPATATTKEAPPSTSSSPPDAPATPATPASS) shows a compositional bias: low complexity. Residues 520 to 534 (LTGSPPESETPPVLQ) show a composition bias toward polar residues. Residues 621 to 712 (LVENNHEATL…YGTEVLNHYR (92 aa)) are SAM-like.

As to quaternary structure, homodimer. Interacts with ubc-9. Binds through its N-terminal region to the N-terminal region of sor-1. Post-translationally, sumoylated by ubc-9. Sumoylation is required for the transcriptional regulation of homeotic genes. Widely expressed. Weakly expressed in most somatic cells of 50-cell stage embryos. At 200 cell stage, it is strongly expressed. By comma stage, it is expressed in most somatic cells.

The protein resides in the nucleus. Polycomb group (PcG) protein. PcG proteins act by forming multiprotein complexes, which are required to maintain the transcriptionally repressive state of homeotic genes throughout development. PcG proteins are not required to initiate repression, but to maintain it during later stages of development. Also required to repress expression of other genes and for localization of sor-1. Binds RNA. In Caenorhabditis elegans, this protein is Polycomb protein sop-2 (sop-2).